Consider the following 308-residue polypeptide: Probable serine/threonine-protein kinase KIN28 homolog (308 aa).

A Protein kinase domain is found at 4–294 (YIRERRLGEG…CDDAIKHPYF (291 aa)). ATP-binding positions include 10-18 (LGEGTYAVI) and K46. D139 acts as the Proton acceptor in catalysis.

Belongs to the protein kinase superfamily. CMGC Ser/Thr protein kinase family. CDC2/CDKX subfamily. As to quaternary structure, component of the TFIIH holo complex.

It localises to the nucleus. The catalysed reaction is [DNA-directed RNA polymerase] + ATP = phospho-[DNA-directed RNA polymerase] + ADP + H(+). Functionally, protein kinase component of transcription factor IIH (TFIIH) which phosphorylates the C-terminal domain of RNA polymerase II during transition from transcription to elongation after preinitiation complex (PIC) formation, thereby positively regulating transcription. Essential for both basal and activated transcription, and is involved in nucleotide excision repair (NER) of damaged DNA. The chain is Probable serine/threonine-protein kinase KIN28 homolog (KIN28) from Encephalitozoon cuniculi (strain GB-M1) (Microsporidian parasite).